We begin with the raw amino-acid sequence, 370 residues long: UDP-N-acetylglucosamine--N-acetylmuramyl-(pentapeptide) pyrophosphoryl-undecaprenol N-acetylglucosamine transferase (370 aa).

Residues 10-12, N124, R166, S198, I252, and Q297 contribute to the UDP-N-acetyl-alpha-D-glucosamine site; that span reads TGG.

Belongs to the glycosyltransferase 28 family. MurG subfamily.

The protein localises to the cell membrane. It catalyses the reaction di-trans,octa-cis-undecaprenyl diphospho-N-acetyl-alpha-D-muramoyl-L-alanyl-D-glutamyl-meso-2,6-diaminopimeloyl-D-alanyl-D-alanine + UDP-N-acetyl-alpha-D-glucosamine = di-trans,octa-cis-undecaprenyl diphospho-[N-acetyl-alpha-D-glucosaminyl-(1-&gt;4)]-N-acetyl-alpha-D-muramoyl-L-alanyl-D-glutamyl-meso-2,6-diaminopimeloyl-D-alanyl-D-alanine + UDP + H(+). It participates in cell wall biogenesis; peptidoglycan biosynthesis. Functionally, cell wall formation. Catalyzes the transfer of a GlcNAc subunit on undecaprenyl-pyrophosphoryl-MurNAc-pentapeptide (lipid intermediate I) to form undecaprenyl-pyrophosphoryl-MurNAc-(pentapeptide)GlcNAc (lipid intermediate II). The chain is UDP-N-acetylglucosamine--N-acetylmuramyl-(pentapeptide) pyrophosphoryl-undecaprenol N-acetylglucosamine transferase from Finegoldia magna (strain ATCC 29328 / DSM 20472 / WAL 2508) (Peptostreptococcus magnus).